The primary structure comprises 297 residues: IMPACT family member C14C8.09c (297 aa).

The stretch at 225–255 (LRSELQEKNQKDKKKEVNKLEEKMTNAKEPN) forms a coiled coil. Basic and acidic residues-rich tracts occupy residues 228-250 (ELQEKNQKDKKKEVNKLEEKMTN) and 280-297 (SVDHKEASKIIKDVEKEE). The tract at residues 228–297 (ELQEKNQKDK…KIIKDVEKEE (70 aa)) is disordered.

The protein belongs to the IMPACT family.

This Schizosaccharomyces pombe (strain 972 / ATCC 24843) (Fission yeast) protein is IMPACT family member C14C8.09c.